A 260-amino-acid polypeptide reads, in one-letter code: MILNKIKVVVAGFRGKMGSTAVQMILNAPNFELVALLGRKEEVSEAFDVPVFNRKEELENIEADVWLDLTAPEVAYENAYFALEHGLKPVVGTTGFTEDEVARLIKFSREKELGGLIAPNFALGAVLLMQFSKQAVKYFPDVEIIELHHDGKKDAPSGTAVKTAELMAEERLAHHQGAVDEKESLVGARGAVLEGMRIHSVRLPGLVAHQEVIFGSKGEGLTLRHDSYDRSSFMTGIALGIRKVMTVSELKYGLEHFLDL.

Residues 12–17, 92–94, and 118–121 each bind NAD(+); these read GFRGKM, GTT, and APNF. Catalysis depends on His148, which acts as the Proton donor/acceptor. His149 is a binding site for (S)-2,3,4,5-tetrahydrodipicolinate. Lys152 (proton donor) is an active-site residue. Residue 158-159 coordinates (S)-2,3,4,5-tetrahydrodipicolinate; the sequence is GT.

This sequence belongs to the DapB family.

It localises to the cytoplasm. The enzyme catalyses (S)-2,3,4,5-tetrahydrodipicolinate + NAD(+) + H2O = (2S,4S)-4-hydroxy-2,3,4,5-tetrahydrodipicolinate + NADH + H(+). It catalyses the reaction (S)-2,3,4,5-tetrahydrodipicolinate + NADP(+) + H2O = (2S,4S)-4-hydroxy-2,3,4,5-tetrahydrodipicolinate + NADPH + H(+). It functions in the pathway amino-acid biosynthesis; L-lysine biosynthesis via DAP pathway; (S)-tetrahydrodipicolinate from L-aspartate: step 4/4. Its function is as follows. Catalyzes the conversion of 4-hydroxy-tetrahydrodipicolinate (HTPA) to tetrahydrodipicolinate. This Lactococcus lactis subsp. cremoris (strain SK11) protein is 4-hydroxy-tetrahydrodipicolinate reductase.